The chain runs to 430 residues: Hydrogenobyrinate a,c-diamide synthase (430 aa).

One can recognise a GATase cobBQ-type domain in the interval 239 to 422 (RIGVARDAAF…IHFYLPSDPL (184 aa)). The active-site Nucleophile is Cys-321.

Belongs to the CobB/CbiA family. Mg(2+) is required as a cofactor.

The catalysed reaction is hydrogenobyrinate + 2 L-glutamine + 2 ATP + 2 H2O = hydrogenobyrinate a,c-diamide + 2 L-glutamate + 2 ADP + 2 phosphate + 2 H(+). The protein operates within cofactor biosynthesis; adenosylcobalamin biosynthesis; cob(II)yrinate a,c-diamide from precorrin-2 (aerobic route): step 9/10. In terms of biological role, catalyzes the ATP-dependent amidation of the two carboxylate groups at positions a and c of hydrogenobyrinate, using either L-glutamine or ammonia as the nitrogen source. This chain is Hydrogenobyrinate a,c-diamide synthase, found in Stutzerimonas stutzeri (strain A1501) (Pseudomonas stutzeri).